Consider the following 656-residue polypeptide: MPSRKSKAAALDTPQSESSTFSSTLDSSAPSPARNLRRSGRNILQPSSEKDRDHEKRSGEELAGRMMGKDANGHCLREGKEQEEGVKMAIEGLARMERRLQRATKRQKKQLEEDGIPVPSVVSRFPTAPYHHKSTNAEEREAKEPVLKTHSKDVEREAEIGVDDVVKMEPAATNIIEPEDAQDAAERGAARPPAVNSSYLPLPWKGRLGYACLNTYLRNAKPPIFSSRTCRMASIVDHRHPLQFEDEPEHHLKNKPDKSKEPQDELGHKFVQELGLANARDIVKMLCWNEKYGIRFLRLSSEMFPFASHPVHGYKLAPFASEVLAEAGRVAAELGHRLTTHPGQFTQLGSPRKEVVESAIRDLEYHDELLSLLKLPEQQNRDAVMIIHMGGQFGDKAATLERFKRNYARLSQSCKNRLVLENDDVGWTVHDLLPVCEELNIPMVLDYHHHNICFDPAHLREGTLDISDPKLQERIANTWKRKGIKQKMHYSEPCDGAVTPRDRRKHRPRVMTLPPCPPDMDLMIEAKDKEQAVFELMRTFKLPGFEKINDMVPYDRDDENRPAPPVKAPKKKKGGKRKRTTDEEAAEPEEVDTAADDVKDAPEGPKEVPEEERAMGGPYNRVYWPLGCEEWLKPKKREVKKGKVPEEVEDEGEFDG.

7 disordered regions span residues 1–82 (MPSR…GKEQ), 119–146 (PSVV…KEPV), 175–194 (IIEP…RPPA), 241–264 (PLQF…EPQD), 492–515 (EPCD…TLPP), 550–620 (DMVP…GPYN), and 636–656 (KREV…EFDG). Low complexity predominate over residues 13-32 (TPQSESSTFSSTLDSSAPSP). Basic and acidic residues-rich tracts occupy residues 48-82 (SEKD…GKEQ) and 135-146 (TNAEEREAKEPV). The span at 550 to 561 (DMVPYDRDDENR) shows a compositional bias: basic and acidic residues. A compositionally biased stretch (basic residues) spans 568 to 579 (APKKKKGGKRKR). A compositionally biased stretch (acidic residues) spans 583 to 595 (EEAAEPEEVDTAA). The segment covering 596–614 (DDVKDAPEGPKEVPEEERA) has biased composition (basic and acidic residues). Residues 647–656 (EVEDEGEFDG) show a composition bias toward acidic residues.

The protein belongs to the uve1/UvsE family. Mg(2+) serves as cofactor.

Its function is as follows. Endonuclease for the repair of UV-irradiated DNA. Involved in the excision of cyclobutane pyrimidine dimers (CPD) and 6-4 pyrimidine pyrimidones (6-4PP) which forms the UV damage repair (UVDR) pathway. The chain is UV-damage endonuclease (mus-18) from Neurospora crassa (strain ATCC 24698 / 74-OR23-1A / CBS 708.71 / DSM 1257 / FGSC 987).